The sequence spans 333 residues: Transaldolase (333 aa).

Residue K135 is the Schiff-base intermediate with substrate of the active site.

Belongs to the transaldolase family. Type 1 subfamily. Homodimer.

Its subcellular location is the cytoplasm. The enzyme catalyses D-sedoheptulose 7-phosphate + D-glyceraldehyde 3-phosphate = D-erythrose 4-phosphate + beta-D-fructose 6-phosphate. The protein operates within carbohydrate degradation; pentose phosphate pathway; D-glyceraldehyde 3-phosphate and beta-D-fructose 6-phosphate from D-ribose 5-phosphate and D-xylulose 5-phosphate (non-oxidative stage): step 2/3. Functionally, transaldolase is important for the balance of metabolites in the pentose-phosphate pathway. The polypeptide is Transaldolase (Prochlorococcus marinus (strain MIT 9301)).